Consider the following 465-residue polypeptide: Probable protein phosphatase 2C 71 (465 aa).

3 disordered regions span residues 14-47 (RPCKLAPPPPPPLPVSPSPRHHRRPHSTATACRA), 68-119 (RPRD…GEVT), and 133-191 (SGGA…PAEE). Pro residues predominate over residues 18-30 (LAPPPPPPLPVSP). Composition is skewed to low complexity over residues 84–106 (AVAPEAAAVVESGLDGDAAAAAE) and 133–143 (SGGAEATATSG). Residues 222–460 (ASGAAILPHP…DDIAVVVSIV (239 aa)) form the PPM-type phosphatase domain. Asp-254, Gly-255, Asp-384, and Asp-451 together coordinate Mn(2+).

It belongs to the PP2C family. It depends on Mg(2+) as a cofactor. Mn(2+) serves as cofactor.

The catalysed reaction is O-phospho-L-seryl-[protein] + H2O = L-seryl-[protein] + phosphate. The enzyme catalyses O-phospho-L-threonyl-[protein] + H2O = L-threonyl-[protein] + phosphate. This is Probable protein phosphatase 2C 71 from Oryza sativa subsp. japonica (Rice).